The sequence spans 191 residues: Gastrokine-3 (191 aa).

The first 30 residues, 1–30 (MPLHSLERDNMRRLIAPSILVTVFLVPALA), serve as a signal peptide directing secretion. N-linked (GlcNAc...) asparagine glycosylation occurs at N33. Residues 63-155 (NSVQSEWDGV…LCRAVPTYFA (93 aa)) enclose the BRICHOS domain. Cysteines 90 and 147 form a disulfide.

The protein belongs to the gastrokine family. Expressed in stomach. Present in mucus cells at the base of antral glands, and Brunner glands of the duodenum. Present at lower levels in the mucus neck cell region of the fundus (at protein level).

The protein resides in the secreted. Functionally, inhibits gastric epithelial cell proliferation. The chain is Gastrokine-3 (Gkn3) from Mus musculus (Mouse).